The chain runs to 321 residues: Lipoyl synthase (321 aa).

The [4Fe-4S] cluster site is built by Cys-68, Cys-73, Cys-79, Cys-94, Cys-98, Cys-101, and Ser-308. A Radical SAM core domain is found at 80 to 297 (FNHGTATFMI…KEIALELGFT (218 aa)).

This sequence belongs to the radical SAM superfamily. Lipoyl synthase family. [4Fe-4S] cluster is required as a cofactor.

The protein localises to the cytoplasm. The catalysed reaction is [[Fe-S] cluster scaffold protein carrying a second [4Fe-4S](2+) cluster] + N(6)-octanoyl-L-lysyl-[protein] + 2 oxidized [2Fe-2S]-[ferredoxin] + 2 S-adenosyl-L-methionine + 4 H(+) = [[Fe-S] cluster scaffold protein] + N(6)-[(R)-dihydrolipoyl]-L-lysyl-[protein] + 4 Fe(3+) + 2 hydrogen sulfide + 2 5'-deoxyadenosine + 2 L-methionine + 2 reduced [2Fe-2S]-[ferredoxin]. It participates in protein modification; protein lipoylation via endogenous pathway; protein N(6)-(lipoyl)lysine from octanoyl-[acyl-carrier-protein]: step 2/2. Its function is as follows. Catalyzes the radical-mediated insertion of two sulfur atoms into the C-6 and C-8 positions of the octanoyl moiety bound to the lipoyl domains of lipoate-dependent enzymes, thereby converting the octanoylated domains into lipoylated derivatives. The chain is Lipoyl synthase from Vibrio cholerae serotype O1 (strain ATCC 39541 / Classical Ogawa 395 / O395).